A 324-amino-acid polypeptide reads, in one-letter code: MQYNPLGKTDLRVSRLCLGCMTFGEPDRGNHAWTLPEESSRPIIKRALEGGINFFDTANSYSDGSSEEIVGRALRDFARREDVVVATKVFHRVGDLPEGLSRAQILRSIDDSLRRLGMDYVDILQIHRWDYNTPIEETLEALNDVVKAGKARYIGASSMHASQFAQALELQKQHGWAQFVSMQDHYNLIYREEEREMLPLCYQEGVAVIPWSPLARGRLTRPWGETTARLVSDEVGKNLYKESDENDAQIAERLTGVSEELGATRAQVALAWLLSKPGIAAPIIGTSREEQLDELLNAVDITLKPEQIAELETPYKPHPVVGFK.

Y61 serves as the catalytic Proton donor.

It belongs to the aldo/keto reductase family. Aldo/keto reductase 2 subfamily.

It carries out the reaction D-ribulose 5-phosphate + AH2 = 1-deoxy-D-xylulose 5-phosphate + A + H2O. With respect to regulation, NADH, NADPH or ATP do not increase activity. In terms of biological role, catalyzes the conversion of ribulose 5-phosphate (Ru5P) to 1-deoxy-D-xylulose 5-phosphate (DXP), providing a direct route from pentoses to terpenes. May play a role in biosynthesis of DXP under conditions of thiamine starvation. The sequence is that of 1-deoxyxylulose-5-phosphate synthase YajO (yajO) from Escherichia coli (strain K12).